Reading from the N-terminus, the 905-residue chain is MTNPSPKLTPMFEQYLRIKEDYPDALLFYRMGDFYELFFDDAETTARELQIALTCRNPNAELKAPMCGVPYHAVEGYISQLLDKGYRVAICEQIEDPKEAKGLVKRAVTRVLTPGTVIDDANLDAKEHNYLGALFWNQDAEAGAFAWVDVSTGEWSGLYSRKLAELWQWAQKMAPRELLLPEGVDTPAMATLGTTQTVRVPARSHFDLKSGTERVMRAQGVADLGSLGLEGKPELVRACAALLAYLAQTQKQELSHLAPFKPLNLGRHLIIDEVTERNLELFHRLDGRKGPGTLWHILDRTLTPMGGRLLEERMHHPWREAGPIRETQQVVEWLFQDDVRREALRTALDLVYDLERLSTRIFLNRATPKDFIALRQSLSALPAVRATLERPANPEGTYPTDAETSGDTLPKPLSDMLSAWDDLADYADLLRRALTDNPPHLVTEGGLFRPGFDPDLDELLDLAEHGEARLQELLAEEQTVSGLPKLKLGYNRVFGYFFELSRAGADSVPEHFVRRQTLANAERFTTERLKELEEKLVSATDRRKTLEYRLFQSLRDTVAEARPRVLFMADMLAHLDFWQSLADVARRNGWVRPDVHTGHDIVIREGRHPVVEAMQGSASFVPNDLRMDEKRRLLLITGPNMAGKSTVLRQTAIICLLAQMGAFVPAREASIGIADRIFSRVGASDNLAQGQSTFMVEMMETARILRQASKRSLVILDEIGRGTSTFDGMALAWAVVEELTRRAGGGIRTLFATHYHEITSLEGRIPGVHNMNIAIREWNGDIVFLRRLVPGPADKSYGIEVARLAGVPHSVVQRARELLADLERTRDAARGTNSAPSRQTLPGLDLPSKQEQVDTIVAPPPCSGVEHPLLVALRDIDTDDMTPLEALKRITEWKQLWGTTREDRS.

The interval 388 to 410 (LERPANPEGTYPTDAETSGDTLP) is disordered. 638-645 (GPNMAGKS) contacts ATP. Positions 826 to 847 (RDAARGTNSAPSRQTLPGLDLP) are disordered. Positions 831 to 840 (GTNSAPSRQT) are enriched in polar residues.

This sequence belongs to the DNA mismatch repair MutS family.

Its function is as follows. This protein is involved in the repair of mismatches in DNA. It is possible that it carries out the mismatch recognition step. This protein has a weak ATPase activity. In Nitratidesulfovibrio vulgaris (strain DP4) (Desulfovibrio vulgaris), this protein is DNA mismatch repair protein MutS.